The following is a 64-amino-acid chain: Large ribosomal subunit protein bL35 (64 aa).

Belongs to the bacterial ribosomal protein bL35 family.

This is Large ribosomal subunit protein bL35 from Micrococcus luteus (strain ATCC 4698 / DSM 20030 / JCM 1464 / CCM 169 / CCUG 5858 / IAM 1056 / NBRC 3333 / NCIMB 9278 / NCTC 2665 / VKM Ac-2230) (Micrococcus lysodeikticus).